We begin with the raw amino-acid sequence, 202 residues long: Regulator of G-protein signaling 16 (202 aa).

S-palmitoyl cysteine attachment occurs at residues C2 and C12. Positions 65-181 (SFDLLLSSKN…LKSPAYRDLA (117 aa)) constitute an RGS domain. Y168 carries the post-translational modification Phosphotyrosine; by EGFR. Y177 is modified (phosphotyrosine).

In terms of assembly, interacts with GNAI1 and GNAQ. Interacts with GNAI2, GNAI3 and GNAO1. In terms of processing, palmitoylated on Cys-2 and/or Cys-12. Post-translationally, phosphorylated. Phosphorylation at Tyr-168 by EGFR enhances GTPase accelerating (GAP) activity toward GNAI1. As to expression, abundantly expressed in retina with lower levels of expression in most other tissues.

The protein resides in the membrane. In terms of biological role, regulates G protein-coupled receptor signaling cascades. Inhibits signal transduction by increasing the GTPase activity of G protein alpha subunits, thereby driving them into their inactive GDP-bound form. Plays an important role in the phototransduction cascade by regulating the lifetime and effective concentration of activated transducin alpha. May regulate extra and intracellular mitogenic signals. In Homo sapiens (Human), this protein is Regulator of G-protein signaling 16 (RGS16).